The following is a 479-amino-acid chain: PTS system glucose-specific EIICB component (479 aa).

A PTS EIIC type-1 domain is found at 1–388; sequence MFKNAFSNLQ…FNLKTPGREK (388 aa). 9 consecutive transmembrane segments (helical) span residues 15-35, 51-71, 80-100, 112-132, 152-172, 252-272, 280-300, 305-325, and 356-376; these read SLML…IGSA, AGSS…ALGF, LAAV…IPIF, YLLD…AYIF, FVPI…SIIW, GGFI…WHCA, IGGI…TEPI, ILVA…AFPI, and LFPI…YFMI. A PTS EIIB type-1 domain is found at 399–479; it reads KETALLVISI…IDNYMSNTNQ (81 aa). Cys421 (phosphocysteine intermediate; for EIIB activity) is an active-site residue. Cys421 is subject to Phosphocysteine.

Its subcellular location is the cell inner membrane. The enzyme catalyses N(pros)-phospho-L-histidyl-[protein] + D-glucose(out) = D-glucose 6-phosphate(in) + L-histidyl-[protein]. The phosphoenolpyruvate-dependent sugar phosphotransferase system (sugar PTS), a major carbohydrate active transport system, catalyzes the phosphorylation of incoming sugar substrates concomitantly with their translocation across the cell membrane. The enzyme II complex composed of PtsG and Crr is involved in glucose transport. The polypeptide is PTS system glucose-specific EIICB component (ptsG) (Buchnera aphidicola subsp. Baizongia pistaciae (strain Bp)).